We begin with the raw amino-acid sequence, 207 residues long: Casparian strip membrane protein 1 (207 aa).

An N-acetylalanine modification is found at Ala2. Residues 2 to 44 are Cytoplasmic-facing; that stretch reads AKESTTIDVGEPNTMTKSTSHVVVDEKKKKGFVAAAAGGGYKR. A helical membrane pass occupies residues 45–65; the sequence is GLAVFDFLLRLAAIGITIGAS. Over 66–95 the chain is Extracellular; the sequence is SVMFTAEETLPFFTQFLQFQAGYDDFPTFQ. Residues 96 to 116 traverse the membrane as a helical segment; the sequence is FFVIAIAIVASYLVLSLPFSI. The Cytoplasmic portion of the chain corresponds to 117-128; it reads VTIVRPLAVAPR. The chain crosses the membrane as a helical span at residues 129–149; sequence LILLISDTVVLTLTTAAAAAA. Topologically, residues 150–181 are extracellular; it reads ASIVYLAHNGNTNTNWLPICQQFGDFCQTAST. Residues 182–202 traverse the membrane as a helical segment; the sequence is AVVAASISVAFFVLLIVISAI. The Cytoplasmic portion of the chain corresponds to 203 to 207; that stretch reads ALKRH.

Belongs to the Casparian strip membrane proteins (CASP) family. As to quaternary structure, homodimer and heterodimers.

It localises to the cell membrane. In terms of biological role, regulates membrane-cell wall junctions and localized cell wall deposition. Required for establishment of the Casparian strip membrane domain (CSD) and the subsequent formation of Casparian strips, a cell wall modification of the root endodermis that determines an apoplastic barrier between the intraorganismal apoplasm and the extraorganismal apoplasm and prevents lateral diffusion. The protein is Casparian strip membrane protein 1 of Raphanus raphanistrum (Wild radish).